The primary structure comprises 876 residues: ATPase WRNIP1 (876 aa).

2 stretches are compositionally biased toward low complexity: residues 56–85 (NKSN…TPTK) and 104–175 (NNNN…INNN). A disordered region spans residues 56–175 (NKSNGNNSIN…NNNNNNINNN (120 aa)). ATP is bound at residue 240–246 (PGCGKTT). Disordered stretches follow at residues 621-647 (KDRQ…PQQQ), 714-737 (INNK…LNPT), and 833-876 (ETKA…SLDF). Low complexity-rich tracts occupy residues 626–647 (SQDQ…PQQQ) and 714–731 (INNK…VNNS). A compositionally biased stretch (polar residues) spans 835-849 (KAISSTDTKESVSIN). A compositionally biased stretch (basic and acidic residues) spans 850-863 (DSDKDLTTTHKNEQ).

This sequence belongs to the AAA ATPase family. RarA/MGS1/WRNIP1 subfamily.

Its subcellular location is the nucleus. It catalyses the reaction ATP + H2O = ADP + phosphate + H(+). Functionally, functions as a modulator for initiation or reinitiation events during DNA polymerase delta-mediated DNA synthesis. Has an intrinsic ATPase activity that functions as a sensor of DNA damage or of arrested replication forks and regulates the extent of DNA synthesis. The sequence is that of ATPase WRNIP1 from Dictyostelium discoideum (Social amoeba).